Consider the following 760-residue polypeptide: Mitochondrial intermediate peptidase (760 aa).

The N-terminal 19 residues, 1 to 19 (MLARSVRTLVVSPKTVFRF), are a transit peptide targeting the mitochondrion. Zn(2+) is bound at residue His-543. Residue Glu-544 is part of the active site. A Zn(2+)-binding site is contributed by His-547.

This sequence belongs to the peptidase M3 family. The cofactor is Zn(2+).

It is found in the mitochondrion matrix. The enzyme catalyses Release of an N-terminal octapeptide as second stage of processing of some proteins imported into the mitochondrion.. Cleaves proteins, imported into the mitochondrion, to their mature size. While most mitochondrial precursor proteins are processed to the mature form in one step by mitochondrial processing peptidase (MPP), the sequential cleavage by MIP of an octapeptide after initial processing by MPP is a required step for a subgroup of nuclear-encoded precursor proteins destined for the matrix or the inner membrane. The chain is Mitochondrial intermediate peptidase (OCT1) from Leucoagaricus gongylophorus (Leaf-cutting ant fungus).